Reading from the N-terminus, the 337-residue chain is DNA-directed RNA polymerase subunit alpha (337 aa).

An alpha N-terminal domain (alpha-NTD) region spans residues 1-233 (MVREKVTVST…DLFIPFLHME (233 aa)). The alpha C-terminal domain (alpha-CTD) stretch occupies residues 264-337 (NKKIALKSIF…FVIDLAKNKF (74 aa)).

It belongs to the RNA polymerase alpha chain family. In plastids the minimal PEP RNA polymerase catalytic core is composed of four subunits: alpha, beta, beta', and beta''. When a (nuclear-encoded) sigma factor is associated with the core the holoenzyme is formed, which can initiate transcription.

Its subcellular location is the plastid. It is found in the chloroplast. The enzyme catalyses RNA(n) + a ribonucleoside 5'-triphosphate = RNA(n+1) + diphosphate. DNA-dependent RNA polymerase catalyzes the transcription of DNA into RNA using the four ribonucleoside triphosphates as substrates. This chain is DNA-directed RNA polymerase subunit alpha, found in Atropa belladonna (Belladonna).